A 418-amino-acid polypeptide reads, in one-letter code: MTLASMIEDIARRARTAARPLATASADTKNTVLAEIARGLAHGKREIEAENQKDLKAARDSGMSAAMIDRLTISDQTLESMIKGLNQVIALPDPVGRITGAWTRPNGLEISKRRIPLGVIAMIYESRPNVTVDAAALCLKAGNAAILRGGSEAFFSNTILARIIGNALETVGISRDSVQVLPVKDRQAITELLQQEAYIDLVIPRGGESLIRFVVKHSTIPVLKHYKGVCHVYVDETCNMDEAVDICINAKTQRPGVCNAMETLLVHERIAPLFLPRMAQAFSAAKVEMRGCPATLAMVPQALPADETDWSTEYLDLIVSVKIVKDLAQAMAHIAVFGSDHTDVIVTDIPENAETFINTVSSSMVGVNVSTRFNDGGELGLGAEIGISTSRLHAFGPMGLEELTSTKFVVVGKGQTRQ.

It belongs to the gamma-glutamyl phosphate reductase family.

The protein resides in the cytoplasm. The enzyme catalyses L-glutamate 5-semialdehyde + phosphate + NADP(+) = L-glutamyl 5-phosphate + NADPH + H(+). Its pathway is amino-acid biosynthesis; L-proline biosynthesis; L-glutamate 5-semialdehyde from L-glutamate: step 2/2. Functionally, catalyzes the NADPH-dependent reduction of L-glutamate 5-phosphate into L-glutamate 5-semialdehyde and phosphate. The product spontaneously undergoes cyclization to form 1-pyrroline-5-carboxylate. This Desulforapulum autotrophicum (strain ATCC 43914 / DSM 3382 / VKM B-1955 / HRM2) (Desulfobacterium autotrophicum) protein is Gamma-glutamyl phosphate reductase.